The primary structure comprises 602 residues: Translation initiation factor IF-2 (602 aa).

The region spanning 112 to 281 (KRAPIITIMG…LLLCEVLDLK (170 aa)) is the tr-type G domain. The G1 stretch occupies residues 121–128 (GHVDHGKT). 121–128 (GHVDHGKT) lines the GTP pocket. Residues 146–150 (GITQH) are G2. A G3 region spans residues 167-170 (DTPG). GTP-binding positions include 167 to 171 (DTPGH) and 221 to 224 (NKMD). The tract at residues 221 to 224 (NKMD) is G4. The interval 257 to 259 (SAL) is G5.

Belongs to the TRAFAC class translation factor GTPase superfamily. Classic translation factor GTPase family. IF-2 subfamily.

The protein resides in the cytoplasm. Its function is as follows. One of the essential components for the initiation of protein synthesis. Protects formylmethionyl-tRNA from spontaneous hydrolysis and promotes its binding to the 30S ribosomal subunits. Also involved in the hydrolysis of GTP during the formation of the 70S ribosomal complex. The polypeptide is Translation initiation factor IF-2 (Mycoplasmopsis synoviae (strain 53) (Mycoplasma synoviae)).